The chain runs to 132 residues: Small ribosomal subunit protein uS8c (132 aa).

The protein belongs to the universal ribosomal protein uS8 family. In terms of assembly, part of the 30S ribosomal subunit.

The protein localises to the plastid. The protein resides in the chloroplast. In terms of biological role, one of the primary rRNA binding proteins, it binds directly to 16S rRNA central domain where it helps coordinate assembly of the platform of the 30S subunit. The chain is Small ribosomal subunit protein uS8c (rps8) from Zygnema circumcarinatum (Green alga).